The sequence spans 439 residues: Protein dumpy-20 (439 aa).

The tract at residues 93-116 (GTLSDPSLHGSNSSSSTSDVGSSV) is disordered. Low complexity predominate over residues 96 to 116 (SDPSLHGSNSSSSTSDVGSSV). BED-type zinc fingers lie at residues 135 to 184 (PTEN…YQKV) and 349 to 398 (KTEH…YNDV). 8 residues coordinate Zn(2+): C154, C157, H172, H177, C368, C371, H386, and H391.

Functionally, involved in cuticle function and is essential for normal morphological development. The polypeptide is Protein dumpy-20 (dpy-20) (Caenorhabditis briggsae).